Consider the following 312-residue polypeptide: Apolipoprotein E (312 aa).

Positions 1–18 (MKALWAVLLVTLLAGCLA) are cleaved as a signal peptide. 8 repeat units span residues 72–93 (VLMEDTMTEVKAYKKELEEQLG), 94–115 (PVAEETRARLAKEVQAAQARLG), 116–137 (ADMEDLRNRLGQYRNEVHTMLG), 138–159 (QSTEEIRARLSTHLRKMRKRLM), 160–181 (RDAEDLQKRLAVYKAGAREGAE), 182–203 (RGVSALRERLGPLVEQGRQRTA), 204–225 (NLGAGAAQPLRDRAQAFGDRIR), and 226–247 (GRLEEVGNQARDRLEEVREHME). An 8 X 22 AA approximate tandem repeats region spans residues 72-247 (VLMEDTMTEV…RLEEVREHME (176 aa)). Residue methionine 135 is modified to Methionine sulfoxide. Residue serine 139 is modified to Phosphoserine. Residues 150 to 160 (HLRKMRKRLMR) are LDL and other lipoprotein receptors binding. 154-157 (MRKR) is a heparin binding site. Positions 202–282 (TANLGAGAAQ…GWFEPIVEDM (81 aa)) are lipid-binding and lipoprotein association. Heparin is bound at residue 221–228 (GDRIRGRL). Residues 258-312 (QQIRLQAEIFQARLKGWFEPIVEDMHRQWANLMEKIQASVATNPIISTPMPQENQ) form a homooligomerization region. The interval 270–282 (RLKGWFEPIVEDM) is specificity for association with VLDL.

It belongs to the apolipoprotein A1/A4/E family. In terms of assembly, homotetramer. May interact with ABCA1; functionally associated with ABCA1 in the biogenesis of HDLs. May interact with APP/A4 amyloid-beta peptide; the interaction is extremely stable in vitro but its physiological significance is unclear. May interact with MAPT. May interact with MAP2. In the cerebrospinal fluid, interacts with secreted SORL1. Interacts with PMEL; this allows the loading of PMEL luminal fragment on ILVs to induce fibril nucleation. APOE exists as multiple glycosylated and sialylated glycoforms within cells and in plasma. The extent of glycosylation and sialylation are tissue and context specific. Post-translationally, glycated in plasma VLDL. In terms of processing, phosphorylated by FAM20C in the extracellular medium.

The protein localises to the secreted. It localises to the extracellular space. Its subcellular location is the extracellular matrix. The protein resides in the extracellular vesicle. It is found in the endosome. The protein localises to the multivesicular body. APOE is an apolipoprotein, a protein associating with lipid particles, that mainly functions in lipoprotein-mediated lipid transport between organs via the plasma and interstitial fluids. APOE is a core component of plasma lipoproteins and is involved in their production, conversion and clearance. Apolipoproteins are amphipathic molecules that interact both with lipids of the lipoprotein particle core and the aqueous environment of the plasma. As such, APOE associates with chylomicrons, chylomicron remnants, very low density lipoproteins (VLDL) and intermediate density lipoproteins (IDL) but shows a preferential binding to high-density lipoproteins (HDL). It also binds a wide range of cellular receptors including the LDL receptor/LDLR, the LDL receptor-related proteins LRP1, LRP2 and LRP8 and the very low-density lipoprotein receptor/VLDLR that mediate the cellular uptake of the APOE-containing lipoprotein particles. Finally, APOE also has a heparin-binding activity and binds heparan-sulfate proteoglycans on the surface of cells, a property that supports the capture and the receptor-mediated uptake of APOE-containing lipoproteins by cells. A main function of APOE is to mediate lipoprotein clearance through the uptake of chylomicrons, VLDLs, and HDLs by hepatocytes. APOE is also involved in the biosynthesis by the liver of VLDLs as well as their uptake by peripheral tissues ensuring the delivery of triglycerides and energy storage in muscle, heart and adipose tissues. By participating in the lipoprotein-mediated distribution of lipids among tissues, APOE plays a critical role in plasma and tissues lipid homeostasis. APOE is also involved in two steps of reverse cholesterol transport, the HDLs-mediated transport of cholesterol from peripheral tissues to the liver, and thereby plays an important role in cholesterol homeostasis. First, it is functionally associated with ABCA1 in the biogenesis of HDLs in tissues. Second, it is enriched in circulating HDLs and mediates their uptake by hepatocytes. APOE also plays an important role in lipid transport in the central nervous system, regulating neuron survival and sprouting. The polypeptide is Apolipoprotein E (Apoe) (Mus pahari (Gairdner's shrew-mouse)).